Consider the following 446-residue polypeptide: Nitrate/nitrite binding protein NrtA (446 aa).

A signal peptide spans 1–28 (MSNFSRSTRRKFMFTAGAAAIGGVVLHG). Residue C29 is the site of N-palmitoyl cysteine attachment. C29 carries the S-diacylglycerol cysteine lipid modification. 5 residues coordinate nitrate: W102, Q155, H196, G240, and K269.

It belongs to the CmpA/NrtA family. In terms of assembly, the complex is composed of two ATP-binding proteins (NrtC and NrtD), two transmembrane proteins (NrtB) and a solute-binding protein (NrtA).

Its subcellular location is the cell inner membrane. Its function is as follows. Part of the ABC transporter complex NrtABCD involved in nitrate uptake. The complex is probably also involved in nitrite transport. NrtA is the substrate-binding protein. Binds nitrate. In Synechocystis sp. (strain ATCC 27184 / PCC 6803 / Kazusa), this protein is Nitrate/nitrite binding protein NrtA.